Consider the following 199-residue polypeptide: NAD(P)H dehydrogenase (quinone) (199 aa).

The Flavodoxin-like domain occupies 4–190 (ILVLYYSTYG…DGARFQGRHV (187 aa)). FMN-binding positions include 10–15 (STYGHI) and 78–80 (TRF). An NAD(+)-binding site is contributed by tyrosine 12. Tryptophan 98 lines the substrate pocket. FMN is bound by residues 113–119 (STATQHG) and histidine 134.

This sequence belongs to the WrbA family. FMN serves as cofactor.

The enzyme catalyses a quinone + NADH + H(+) = a quinol + NAD(+). The catalysed reaction is a quinone + NADPH + H(+) = a quinol + NADP(+). In Rhizorhabdus wittichii (strain DSM 6014 / CCUG 31198 / JCM 15750 / NBRC 105917 / EY 4224 / RW1) (Sphingomonas wittichii), this protein is NAD(P)H dehydrogenase (quinone).